Reading from the N-terminus, the 525-residue chain is Ribosomal protein S6 kinase beta-1 (525 aa).

The interval 1–54 (MRRRRRRDGFYPAPDFRDREAEDMAGVFDIDLDQPEDAGSEDELEEGGQLNESM) is disordered. The short motif at 28–32 (FDIDL) is the TOS motif element. The segment covering 30–46 (IDLDQPEDAGSEDELEE) has biased composition (acidic residues). The 262-residue stretch at 91-352 (FELLRVLGKG…AGEVQAHPFF (262 aa)) folds into the Protein kinase domain. ATP contacts are provided by residues 97 to 105 (LGKGGYGKV) and Lys123. The active-site Proton acceptor is the Asp218. A Phosphothreonine; by PDPK1 modification is found at Thr252. An AGC-kinase C-terminal domain is found at 353 to 423 (RHINWEELLA…VAPSVLESVK (71 aa)). The disordered stretch occupies residues 380-399 (SQFDSKFTRQTPVDSPDDST). Residues 381–399 (QFDSKFTRQTPVDSPDDST) show a composition bias toward polar residues. The residue at position 394 (Ser394) is a Phosphoserine. A Phosphothreonine; by MTOR, NEK6 and NEK7 modification is found at Thr412. An autoinhibitory domain region spans residues 424-525 (EKFSFEPKIR…KRPEHLRMNL (102 aa)). A phosphoserine mark is found at Ser434 and Ser441. Position 444 is a phosphothreonine (Thr444). Phosphoserine is present on residues Ser447 and Ser452. The interval 486-509 (VTTSGEASAPLPIRQPNSGPYKKQ) is disordered. At Lys516 the chain carries N6-acetyllysine.

The protein belongs to the protein kinase superfamily. AGC Ser/Thr protein kinase family. S6 kinase subfamily. Interacts with PPP1R9A/neurabin-1. Interacts with RPTOR. Interacts with IRS1. Interacts with EIF3B and EIF3C. Interacts with TRAF4. Interacts with POLDIP3. Interacts (via N-terminus) with IER5. In terms of processing, phosphorylation at Thr-412 is regulated by mTORC1. The phosphorylation at this site is maintained by an agonist-dependent autophosphorylation mechanism. Activated by phosphorylation at Thr-252 by PDPK1. Dephosphorylation by PPP1CC at Thr-412 in mitochondrion.

It localises to the cytoplasm. The protein localises to the synapse. It is found in the synaptosome. The protein resides in the mitochondrion outer membrane. Its subcellular location is the mitochondrion. The catalysed reaction is L-seryl-[protein] + ATP = O-phospho-L-seryl-[protein] + ADP + H(+). It catalyses the reaction L-threonyl-[protein] + ATP = O-phospho-L-threonyl-[protein] + ADP + H(+). With respect to regulation, activation requires multiple phosphorylation events on serine/threonine residues. Activation appears to be first mediated by phosphorylation of multiple sites in the autoinhibitory domain, which facilitates phosphorylation at Thr-412, disrupting the autoinhibitory mechanism and allowing phosphorylation of Thr-252 by PDPK1. The active conformation of the kinase is believed to be stabilized by a mechanism involving three conserved phosphorylation sites located in the kinase domain activation loop (Thr-252) and in the AGC-kinase C-terminal domain (Ser-394 in the middle of the tail/linker region and Thr-412 within a hydrophobic motif at its end). Activated by mTORC1; isoform Alpha I and isoform Alpha II are sensitive to rapamycin, which inhibits activating phosphorylation at Thr-412. Activated by PDPK1. Its function is as follows. Serine/threonine-protein kinase that acts downstream of mTOR signaling in response to growth factors and nutrients to promote cell proliferation, cell growth and cell cycle progression. Regulates protein synthesis through phosphorylation of EIF4B, RPS6 and EEF2K, and contributes to cell survival by repressing the pro-apoptotic function of BAD. Under conditions of nutrient depletion, the inactive form associates with the EIF3 translation initiation complex. Upon mitogenic stimulation, phosphorylation by the mechanistic target of rapamycin complex 1 (mTORC1) leads to dissociation from the EIF3 complex and activation. The active form then phosphorylates and activates several substrates in the pre-initiation complex, including the EIF2B complex and the cap-binding complex component EIF4B. Also controls translation initiation by phosphorylating a negative regulator of EIF4A, PDCD4, targeting it for ubiquitination and subsequent proteolysis. Promotes initiation of the pioneer round of protein synthesis by phosphorylating POLDIP3/SKAR. In response to IGF1, activates translation elongation by phosphorylating EEF2 kinase (EEF2K), which leads to its inhibition and thus activation of EEF2. Also plays a role in feedback regulation of mTORC2 by mTORC1 by phosphorylating MAPKAP1/SIN1, MTOR and RICTOR, resulting in the inhibition of mTORC2 and AKT1 signaling. Also involved in feedback regulation of mTORC1 and mTORC2 by phosphorylating DEPTOR. Mediates cell survival by phosphorylating the pro-apoptotic protein BAD and suppressing its pro-apoptotic function. Phosphorylates mitochondrial URI1 leading to dissociation of a URI1-PPP1CC complex. The free mitochondrial PPP1CC can then dephosphorylate RPS6KB1 at Thr-412, which is proposed to be a negative feedback mechanism for the RPS6KB1 anti-apoptotic function. Mediates TNF-alpha-induced insulin resistance by phosphorylating IRS1 at multiple serine residues, resulting in accelerated degradation of IRS1. In cells lacking functional TSC1-2 complex, constitutively phosphorylates and inhibits GSK3B. May be involved in cytoskeletal rearrangement through binding to neurabin. Phosphorylates and activates the pyrimidine biosynthesis enzyme CAD, downstream of MTOR. Following activation by mTORC1, phosphorylates EPRS and thereby plays a key role in fatty acid uptake by adipocytes and also most probably in interferon-gamma-induced translation inhibition. The sequence is that of Ribosomal protein S6 kinase beta-1 (RPS6KB1) from Oryctolagus cuniculus (Rabbit).